The primary structure comprises 109 residues: Oncomodulin-1 (109 aa).

Residue S2 is modified to N-acetylserine. 2 EF-hand domains span residues M39–G74 and L78–S109. The Ca(2+) site is built by D52, D54, S56, Y58, E63, D91, D93, D95, K97, and E102.

The protein belongs to the parvalbumin family.

Its function is as follows. Has some calmodulin-like activity with respect to enzyme activation and growth regulation. Binds two calcium ions. This Homo sapiens (Human) protein is Oncomodulin-1 (OCM).